We begin with the raw amino-acid sequence, 69 residues long: uncharacterized protein (69 aa).

Positions 1–18 (MAMLWISMFIIMRKYGRS) are cleaved as a signal peptide. The tract at residues 17–69 (RSSSSSSSSSSSSSSSSSSSSSSSSSSSSSSSSSSSSSSSSGSSSNSNRVVVV) is disordered. A compositionally biased stretch (low complexity) spans 18 to 61 (SSSSSSSSSSSSSSSSSSSSSSSSSSSSSSSSSSSSSSSSGSSS).

The protein resides in the secreted. This is an uncharacterized protein from Dictyostelium discoideum (Social amoeba).